A 61-amino-acid polypeptide reads, in one-letter code: Temporin-ALi (61 aa).

The signal sequence occupies residues 1 to 22; that stretch reads MFPLKKSLLLLFFLATINLSLC. Residues 23–46 constitute a propeptide that is removed on maturation; that stretch reads EQERNAEEERRDEPDERNAEVEKR. Residue leucine 59 is modified to Leucine amide.

This sequence belongs to the frog skin active peptide (FSAP) family. Temporin subfamily. In terms of tissue distribution, expressed by the skin glands.

The protein resides in the secreted. In terms of biological role, antimicrobial peptide with activity against Gram-positive and Gram-negative bacteria and against fungi. Has been tested against S.aureus (MIC=7.5 ug/mL), B.pumilus (MIC=7.5 ug/mL), B.cereus (MIC=75.0 ug/mL), E.coli (MIC=7.5 ug/mL), B.dysenteriae (MIC=20.0 ug/mL), A.cacoaceticus (MIC=60.0 ug/mL), P.aeruginosa (MIC=5.0 ug/mL) and C.albicans (MIC=5.0 ug/mL). Also shows a weak hemolytic activity. The sequence is that of Temporin-ALi from Amolops loloensis (Lolokou Sucker Frog).